Here is a 131-residue protein sequence, read N- to C-terminus: MSGGKGGKAGSAAKASQTRSAKAGLTFPVGRVHRLLRRGNYAQRIGSGAPVYLTAVLEYLAAEILELAGNAARDNKKSRIIPRHLQLAIRNDDELNKLLGNVTIAQGGVLPNIHQNLLPKKSAKPSASQEL.

N-acetylserine is present on S2. An N6-acetyllysine mark is found at K5 and K8. Q106 is modified (N5-methylglutamine). The residue at position 128 (S128) is a Phosphoserine. Positions 128–129 (SQ) match the [ST]-Q motif motif.

It belongs to the histone H2A family. As to quaternary structure, the nucleosome is a histone octamer containing two molecules each of H2A, H2B, H3 and H4 assembled in one H3-H4 heterotetramer and two H2A-H2B heterodimers. The octamer wraps approximately 147 bp of DNA. Post-translationally, phosphorylated to form H2AS128ph (gamma-H2A) in response to DNA double-strand breaks (DSBs) generated by exogenous genotoxic agents and by stalled replication forks. Phosphorylation is dependent on the DNA damage checkpoint kinases MEC1/ATR and TEL1/ATM, spreads on either side of a detected DSB site and may mark the surrounding chromatin for recruitment of proteins required for DNA damage signaling and repair. Gamma-H2A is removed from the DNA prior to the strand invasion-primer extension step of the repair process and subsequently dephosphorylated by PPH3, a component of the histone H2A phosphatase complex (HTP-C). Dephosphorylation is necessary for efficient recovery from the DNA damage checkpoint. In terms of processing, acetylated by ESA1 to form H2AK4ac and H2AK7ac.

The protein resides in the nucleus. It localises to the chromosome. Functionally, core component of nucleosome which plays a central role in DNA double strand break (DSB) repair. Nucleosomes wrap and compact DNA into chromatin, limiting DNA accessibility to the cellular machineries which require DNA as a template. Histones thereby play a central role in transcription regulation, DNA repair, DNA replication and chromosomal stability. DNA accessibility is regulated via a complex set of post-translational modifications of histones, also called histone code, and nucleosome remodeling. This is Histone H2A.1 (HTA1) from Candida glabrata (strain ATCC 2001 / BCRC 20586 / JCM 3761 / NBRC 0622 / NRRL Y-65 / CBS 138) (Yeast).